Consider the following 51-residue polypeptide: MYLTPSEKRINLSKVHPTDKLADQIFAYYKEGERDGKDEIIKNVPLKRIRK.

The protein belongs to the CYFIP family. In terms of assembly, component of the WAVE1 complex composed of ABI2, CYFIP1 or CYFIP2, BRK1, NCKAP1 and WASF1/WAVE1. Within the complex, a heterodimer containing NCKAP1 and CYFIP1 interacts with a heterotrimer formed by WAVE1, ABI2 and BRK1. Component of the CYFIP1-EIF4E-FMR1 complex which is composed of CYFIP, EIF4E and FMR1. Interacts with FMR1 but does not bind to related proteins FXR1 or FXR2. Interaction with EIF4E stimulates FMR1 binding. Component of the WAVE2 complex composed of ABI1, CYFIP1/SRA1, NCKAP1/NAP1 (NCKAP1l/HEM1 in hematopoietic cells) and WASF2/WAVE2. Interacts with the active GTP-bound form of RAC1. Interacts through its C-terminus with the C-terminus of DPYSL2/CRMP2 which is necessary for DPYSL2-induced axon outgrowth. Interacts with NYAP1, NYAP2 and MYO16. Interacts with TMEM108 (via N-terminus); the interaction associates TMEM108 with the WAVE1 complex.

The protein localises to the cytoplasm. It is found in the perinuclear region. It localises to the cell projection. Its subcellular location is the lamellipodium. The protein resides in the ruffle. The protein localises to the synapse. It is found in the synaptosome. Component of the CYFIP1-EIF4E-FMR1 complex which binds to the mRNA cap and mediates translational repression. In the CYFIP1-EIF4E-FMR1 complex this subunit is an adapter between EIF4E and FMR1. Promotes the translation repression activity of FMR1 in brain probably by mediating its association with EIF4E and mRNA. Regulates formation of membrane ruffles and lamellipodia. Plays a role in axon outgrowth. Binds to F-actin but not to RNA. Part of the WAVE complex that regulates actin filament reorganization via its interaction with the Arp2/3 complex. Actin remodeling activity is regulated by RAC1. Regulator of epithelial morphogenesis. As component of the WAVE1 complex, required for BDNF-NTRK2 endocytic trafficking and signaling from early endosomes. The sequence is that of Cytoplasmic FMR1-interacting protein 1 from Bos taurus (Bovine).